The sequence spans 491 residues: Transcription factor unc-3 (491 aa).

An interaction with DNA region spans residues 66 to 69 (RKSN). Residues 154–173 (CRVLLTHEVMCSRCCEKKSC) form a C5-type zinc finger. Interaction with DNA regions lie at residues 200–207 (NCLKNAGN) and 239–242 (NNSK). A disordered region spans residues 240–261 (NSKHGRRTKRTDASDDSEYSES). An IPT/TIG domain is found at 269 to 355 (PVIKALFPSE…SRGTPLRFSY (87 aa)).

Belongs to the COE family. As to quaternary structure, may homodimerise. Interacts with jmjd-3.1. May interact with GFI1 homolog pag-3.

The protein localises to the nucleus. Functionally, transcription factor. Involved in motor neuron fate determination and maintenance, acting as an activator of gene expression in a subset of motor neurons. May act in concert with GFI1 homolog pag-3 in motor neuron fate determination. Required to maintain the expression of transcriptional repressors bnc-1 and cfi-1, which play roles in the cell fate of motor neurons. May play a role in the expression of proteins essential for axonal pathfinding and/or neuronal differentiation in both sensory and motor neurons. Cooperates with jmjd-3.1 and wdr-5.1 to ensure robust transdifferentiation of the Y rectal cell to the PDA motor neuron during larval development. This chain is Transcription factor unc-3 (unc-3), found in Caenorhabditis elegans.